Consider the following 416-residue polypeptide: MDKIIVEGGRTLSGEVQVSGAKNAALPILAASLLVDGWNTFYNVPELQDISTIGLLLEHLGAKVEKDGHTIKIDASGLCETEAPYDLVRRMRASVLVLGPLTARLKKARVSLPGGCAIGARPIDQHLRGLEMLGATVELSHGYVEVQAEKLRGADIYLDTPTVTGTENLMMAACLAEGVTILRNVAREPEIVALADLLNRMGGKVEGAGSPVLTITGVEALNPVEFTIIPDRIEAGTFMVAAALTEGDVLVKDAVPAHLQALISKLRLAGATVTEEGNGIRVQGKRPICSVDVKTLPHPGFPTDMQAQFMVLMTTAKGLSVIAETIFENRFIHVSELVRMGANISISQNSAVIRGVKHLSAAPVMATDLRASASLILAGLIAQGSTEIHRVYHIDRGYESIEQKFSQLGAAVRRVK.

A phosphoenolpyruvate-binding site is contributed by 22-23 (KN). Arginine 92 is a UDP-N-acetyl-alpha-D-glucosamine binding site. Cysteine 116 acts as the Proton donor in catalysis. 2-(S-cysteinyl)pyruvic acid O-phosphothioketal is present on cysteine 116. UDP-N-acetyl-alpha-D-glucosamine is bound by residues 121-125 (RPIDQ), aspartate 304, and isoleucine 326.

It belongs to the EPSP synthase family. MurA subfamily.

The protein resides in the cytoplasm. It carries out the reaction phosphoenolpyruvate + UDP-N-acetyl-alpha-D-glucosamine = UDP-N-acetyl-3-O-(1-carboxyvinyl)-alpha-D-glucosamine + phosphate. The protein operates within cell wall biogenesis; peptidoglycan biosynthesis. In terms of biological role, cell wall formation. Adds enolpyruvyl to UDP-N-acetylglucosamine. The sequence is that of UDP-N-acetylglucosamine 1-carboxyvinyltransferase from Desulfatibacillum aliphaticivorans.